The following is a 452-amino-acid chain: UDP-N-acetylmuramoylalanine--D-glutamate ligase (452 aa).

115-121 contributes to the ATP binding site; the sequence is GTNGKTT.

The protein belongs to the MurCDEF family.

It localises to the cytoplasm. It catalyses the reaction UDP-N-acetyl-alpha-D-muramoyl-L-alanine + D-glutamate + ATP = UDP-N-acetyl-alpha-D-muramoyl-L-alanyl-D-glutamate + ADP + phosphate + H(+). It participates in cell wall biogenesis; peptidoglycan biosynthesis. Functionally, cell wall formation. Catalyzes the addition of glutamate to the nucleotide precursor UDP-N-acetylmuramoyl-L-alanine (UMA). This chain is UDP-N-acetylmuramoylalanine--D-glutamate ligase, found in Geobacter metallireducens (strain ATCC 53774 / DSM 7210 / GS-15).